We begin with the raw amino-acid sequence, 39 residues long: Cytochrome b6-f complex subunit 5 (39 aa).

The helical transmembrane segment at 5 to 25 threads the bilayer; the sequence is LLCGIVLGLVPITLLGLFVSA.

This sequence belongs to the PetG family. As to quaternary structure, the 4 large subunits of the cytochrome b6-f complex are cytochrome b6, subunit IV (17 kDa polypeptide, PetD), cytochrome f and the Rieske protein, while the 4 small subunits are PetG, PetL, PetM and PetN. The complex functions as a dimer.

It is found in the cellular thylakoid membrane. In terms of biological role, component of the cytochrome b6-f complex, which mediates electron transfer between photosystem II (PSII) and photosystem I (PSI), cyclic electron flow around PSI, and state transitions. PetG is required for either the stability or assembly of the cytochrome b6-f complex. This chain is Cytochrome b6-f complex subunit 5, found in Prochlorococcus marinus subsp. pastoris (strain CCMP1986 / NIES-2087 / MED4).